The following is a 409-amino-acid chain: Ubiquitin-associated domain-containing protein 1 (409 aa).

Methionine 1 carries the post-translational modification N-acetylmethionine. Positions 14 to 98 constitute a Ubiquitin-like domain; sequence LRLHICAADG…LLLIKKRAPS (85 aa). A UBA 1 domain is found at 187–231; it reads DEDERVDETALRQLTEMGFPESRASKALRLNHMSVPQAMEWLIEH. The segment at 235–273 is disordered; it reads PAIDTPLPGHAAQAEASAAAATSSSSSEAAVGTSVEDEE. The segment covering 245-264 has biased composition (low complexity); the sequence is AAQAEASAAAATSSSSSEAA. The 41-residue stretch at 292 to 332 folds into the UBA 2 domain; sequence RADARAVISLMEMGFDEKEVIDALRVNNNQQNAACEWLLGD. One can recognise an STI1 domain in the interval 357–396; it reads NPVVQLGLTNPKTLLAFEDMLENPLNSTQWMNDPETGPVM.

In terms of assembly, component of the KPC complex composed of RNF123/KPC1 and UBAC1/KPC2. Interacts (via ubiquitin-like domain) with RNF123. Interacts (via ubiquitin-like and UBA domains) with the proteasome via its N-terminal domain.

It localises to the cytoplasm. It participates in protein modification; protein ubiquitination. Its function is as follows. Non-catalytic component of the KPC complex, a E3 ubiquitin-protein ligase complex that mediates polyubiquitination of target proteins, such as CDKN1B and NFKB1. The KPC complex catalyzes polyubiquitination and proteasome-mediated degradation of CDKN1B during G1 phase of the cell cycle. The KPC complex also acts as a key regulator of the NF-kappa-B signaling by promoting maturation of the NFKB1 component of NF-kappa-B by catalyzing ubiquitination of the NFKB1 p105 precursor. Within the KPC complex, UBAC1 acts as an adapter that promotes the transfer of target proteins that have been polyubiquitinated by RNF123/KPC1 to the 26S proteasome. The chain is Ubiquitin-associated domain-containing protein 1 (Ubac1) from Rattus norvegicus (Rat).